Here is a 146-residue protein sequence, read N- to C-terminus: Hemoglobin subunit beta-1 (146 aa).

One can recognise a Globin domain in the interval 2 to 146; sequence GLTAHDRQLI…IADALGKGYH (145 aa). The heme b site is built by histidine 63 and histidine 92.

Belongs to the globin family. Heterotetramer of two alpha chains and two beta chains. As to expression, red blood cells.

In terms of biological role, involved in oxygen transport from the lung to the various peripheral tissues. This chain is Hemoglobin subunit beta-1 (hbb1), found in Xenopus laevis (African clawed frog).